Consider the following 406-residue polypeptide: Alpha-1-antitrypsin (406 aa).

The signal sequence occupies residues 1 to 24; it reads MTSSISWGLLLLAGLCCLVPSFLA. Phosphoserine is present on serine 33. N-linked (GlcNAc...) asparagine glycosylation is found at asparagine 59, asparagine 96, and asparagine 260. The tract at residues 362–381 is RCL; sequence GTTVLEAVPMSIPPDVCFKN. Serine 372 is subject to Phosphoserine.

The protein belongs to the serpin family. In terms of assembly, interacts with CELA2A. Interacts with ERGIC3 and LMAN1/ERGIC53. Interacts with PRSS1/Trypsin. Plasma.

It localises to the secreted. Functionally, inhibitor of serine proteases. Can inhibit elastase, trypsin, chymotrypsin and plasmin. This is Alpha-1-antitrypsin from Meriones unguiculatus (Mongolian jird).